We begin with the raw amino-acid sequence, 575 residues long: Arginine--tRNA ligase (575 aa).

Positions P122–H132 match the 'HIGH' region motif.

It belongs to the class-I aminoacyl-tRNA synthetase family. As to quaternary structure, monomer.

The protein resides in the cytoplasm. It catalyses the reaction tRNA(Arg) + L-arginine + ATP = L-arginyl-tRNA(Arg) + AMP + diphosphate. The sequence is that of Arginine--tRNA ligase from Actinobacillus succinogenes (strain ATCC 55618 / DSM 22257 / CCUG 43843 / 130Z).